A 291-amino-acid polypeptide reads, in one-letter code: Phosphatidylglycerol--prolipoprotein diacylglyceryl transferase (291 aa).

Transmembrane regions (helical) follow at residues 21-41 (VALH…MWLA), 60-80 (LLYA…VLFY), 96-116 (WDGG…MIIF), 130-150 (FIAP…FING), 198-218 (SQLY…NLFI), 225-245 (GAVS…VEFF), and 260-280 (ISMG…MMVW). Arginine 143 is a binding site for a 1,2-diacyl-sn-glycero-3-phospho-(1'-sn-glycerol).

It belongs to the Lgt family.

The protein localises to the cell inner membrane. The enzyme catalyses L-cysteinyl-[prolipoprotein] + a 1,2-diacyl-sn-glycero-3-phospho-(1'-sn-glycerol) = an S-1,2-diacyl-sn-glyceryl-L-cysteinyl-[prolipoprotein] + sn-glycerol 1-phosphate + H(+). It functions in the pathway protein modification; lipoprotein biosynthesis (diacylglyceryl transfer). Catalyzes the transfer of the diacylglyceryl group from phosphatidylglycerol to the sulfhydryl group of the N-terminal cysteine of a prolipoprotein, the first step in the formation of mature lipoproteins. The polypeptide is Phosphatidylglycerol--prolipoprotein diacylglyceryl transferase (Salmonella agona (strain SL483)).